The sequence spans 422 residues: S-adenosylmethionine synthase (422 aa).

ATP is bound at residue H16. D18 lines the Mg(2+) pocket. E44 serves as a coordination point for K(+). The L-methionine site is built by E57 and Q100. The flexible loop stretch occupies residues 100-110 (QSPDISQGVSA). Residues 175 to 177 (DGK), 251 to 252 (KF), D260, 266 to 267 (RK), A283, and K287 contribute to the ATP site. D260 is an L-methionine binding site. Position 291 (K291) interacts with L-methionine.

Belongs to the AdoMet synthase family. In terms of assembly, homotetramer; dimer of dimers. Mg(2+) is required as a cofactor. The cofactor is K(+).

It is found in the cytoplasm. It catalyses the reaction L-methionine + ATP + H2O = S-adenosyl-L-methionine + phosphate + diphosphate. It participates in amino-acid biosynthesis; S-adenosyl-L-methionine biosynthesis; S-adenosyl-L-methionine from L-methionine: step 1/1. Functionally, catalyzes the formation of S-adenosylmethionine (AdoMet) from methionine and ATP. The overall synthetic reaction is composed of two sequential steps, AdoMet formation and the subsequent tripolyphosphate hydrolysis which occurs prior to release of AdoMet from the enzyme. This Rippkaea orientalis (strain PCC 8801 / RF-1) (Cyanothece sp. (strain PCC 8801)) protein is S-adenosylmethionine synthase.